The primary structure comprises 400 residues: Elongation factor Tu 1 (400 aa).

The tr-type G domain occupies 10 to 209 (KPHLNIGTIG…AVDSYIPLPQ (200 aa)). The segment at 19–26 (GHIDHGKT) is G1. Residue 19–26 (GHIDHGKT) coordinates GTP. Position 26 (T26) interacts with Mg(2+). The interval 60 to 64 (GITIN) is G2. The G3 stretch occupies residues 81 to 84 (DCPG). Residues 81-85 (DCPGH) and 136-139 (NKTD) contribute to the GTP site. The tract at residues 136–139 (NKTD) is G4. The interval 174 to 176 (SAL) is G5.

Belongs to the TRAFAC class translation factor GTPase superfamily. Classic translation factor GTPase family. EF-Tu/EF-1A subfamily. Monomer.

It is found in the cytoplasm. The enzyme catalyses GTP + H2O = GDP + phosphate + H(+). In terms of biological role, GTP hydrolase that promotes the GTP-dependent binding of aminoacyl-tRNA to the A-site of ribosomes during protein biosynthesis. The polypeptide is Elongation factor Tu 1 (Syntrophomonas wolfei subsp. wolfei (strain DSM 2245B / Goettingen)).